We begin with the raw amino-acid sequence, 354 residues long: MTNISLTIKAANDQKYAVTVDSESSVLALKEAIAPVADIEKERQRLIYAGRVLKDEESLKTYKIQDGHSIHLVKTLGQNPAAAATNVSDRTQQVPTNIQAGQGANNPLANLTSARYAGFNIPMPSASMFGPNPENPVPPSTEELANMLSNPMVQSSINEMFSNPQMLDMIINSSPHLRNAPPYVRQMMQSPEFRRAMTDPDTMRQMAQLHQQMGAAGIDPMSLMGGGLGGAGLGGLGGAGLGGFGGANNATAGIAGAAPVDQTAAANTIQNLLNNLGGAGFGAGLGDAGLGAGLGGAASPPAPAQDTRPPEERYAEQLSQLNEMGFVDFERNVQALRRSGGNVQGAIESLLSDL.

Residues 1–78 (MTNISLTIKA…SIHLVKTLGQ (78 aa)) form the Ubiquitin-like domain. A UBA domain is found at 309 to 353 (PPEERYAEQLSQLNEMGFVDFERNVQALRRSGGNVQGAIESLLSD).

In terms of biological role, protects ubiquitin chains against dissambly by deubiquitinating enzymes thereby promoting protein degradation. This is Deubiquitination-protection protein dph1 (dph1) from Schizosaccharomyces pombe (strain 972 / ATCC 24843) (Fission yeast).